Reading from the N-terminus, the 62-residue chain is MEQRKCYFCGQMLEPGTGKLYIKKDGSTYFMCSSKCMSNFALGRLPRRTEWTEKGKIQLKKA.

The Zn(2+) site is built by Cys6, Cys9, Cys32, and Cys36. The C4-type zinc-finger motif lies at 6-36 (CYFCGQMLEPGTGKLYIKKDGSTYFMCSSKC).

It belongs to the eukaryotic ribosomal protein eL24 family. In terms of assembly, part of the 50S ribosomal subunit. Forms a cluster with proteins L3 and L14. Zn(2+) serves as cofactor.

In terms of biological role, binds to the 23S rRNA. This chain is Large ribosomal subunit protein eL24, found in Methanosarcina mazei (strain ATCC BAA-159 / DSM 3647 / Goe1 / Go1 / JCM 11833 / OCM 88) (Methanosarcina frisia).